Reading from the N-terminus, the 254-residue chain is Peroxisomal membrane protein 11 homolog (254 aa).

The Cytoplasmic segment spans residues 1–91 (MAGILSKPNY…ILALFKVKNP (91 aa)). A helical transmembrane segment spans residues 92–112 (FAFLNILALIRQSGMYFYWVF). The Lumenal segment spans residues 113-227 (DHLILGTNIG…DLIIASTLLK (115 aa)). The chain crosses the membrane as a helical span at residues 228–248 (IYPFSQGTIGISGIISALIGA). Residues 249-254 (YQMWPK) lie on the Cytoplasmic side of the membrane.

This sequence belongs to the peroxin-11 family.

Its subcellular location is the peroxisome membrane. Involved in peroxisomal proliferation. Could participate in peroxisomal elongation or fission. May be involved in parceling of peroxisomes into regular quanta. The protein is Peroxisomal membrane protein 11 homolog (pex11) of Dictyostelium discoideum (Social amoeba).